Here is a 469-residue protein sequence, read N- to C-terminus: Probable Xaa-Pro aminopeptidase PEPP (469 aa).

Residues D265, D276, E399, and E439 each coordinate Mn(2+).

The protein belongs to the peptidase M24B family. Mn(2+) serves as cofactor.

It carries out the reaction Release of any N-terminal amino acid, including proline, that is linked to proline, even from a dipeptide or tripeptide.. Functionally, catalyzes the removal of a penultimate prolyl residue from the N-termini of peptides. The chain is Probable Xaa-Pro aminopeptidase PEPP (PEPP) from Coccidioides posadasii (strain C735) (Valley fever fungus).